The chain runs to 402 residues: CinA-like protein (402 aa).

It belongs to the CinA family.

The sequence is that of CinA-like protein from Deinococcus deserti (strain DSM 17065 / CIP 109153 / LMG 22923 / VCD115).